Reading from the N-terminus, the 294-residue chain is Eukaryotic translation initiation factor 3 subunit G (294 aa).

A compositionally biased stretch (basic and acidic residues) spans 1–22; that stretch reads MQTFHHQDTGSEDFRQNTMDEK. Disordered regions lie at residues 1–42 and 164–211; these read MQTF…DGTK and GGMG…SDDD. Residues 30 to 42 are compositionally biased toward polar residues; sequence STPQITQNADGTK. The span at 193 to 205 shows a compositional bias: gly residues; it reads GPGGPGGPGGAAG. Residues 214-292 enclose the RRM domain; the sequence is LTLRVTNLSE…LIMKVDYSKK (79 aa).

Belongs to the eIF-3 subunit G family. As to quaternary structure, component of the eukaryotic translation initiation factor 3 (eIF-3) complex.

It is found in the cytoplasm. Its function is as follows. RNA-binding component of the eukaryotic translation initiation factor 3 (eIF-3) complex, which is involved in protein synthesis of a specialized repertoire of mRNAs and, together with other initiation factors, stimulates binding of mRNA and methionyl-tRNAi to the 40S ribosome. The eIF-3 complex specifically targets and initiates translation of a subset of mRNAs involved in cell proliferation. This subunit can bind 18S rRNA. The sequence is that of Eukaryotic translation initiation factor 3 subunit G from Yarrowia lipolytica (strain CLIB 122 / E 150) (Yeast).